Consider the following 607-residue polypeptide: Guanine nucleotide-binding protein-like 1 (607 aa).

Positions 1–14 are enriched in basic residues; the sequence is MPRKKPFSVKQKKK. The segment at 1 to 81 is disordered; sequence MPRKKPFSVK…GPRGYDPNRY (81 aa). Positions 15-26 are enriched in basic and acidic residues; the sequence is QLQDKRERKRGL. Phosphoserine occurs at positions 32, 33, and 34. Phosphothreonine is present on residues T48 and T50. 2 positions are modified to phosphoserine: S51 and S68. The CP-type G domain occupies 178-418; sequence WRQLWRVLEM…LCDCPGLIFP (241 aa). 225-228 contacts GTP; sequence NKVD. S324 is modified (phosphoserine). GTP contacts are provided by residues 367 to 374 and 411 to 415; these read GFPNVGKS and DCPGL. The interval 547–607 is disordered; sequence GPAGDEEEEE…PYALLGEDEC (61 aa). The span at 550–584 shows a compositional bias: acidic residues; that stretch reads GDEEEEEEEELSSSCEEEGEEDRDADEEGEGDEDT. A phosphoserine mark is found at S561, S562, and S563.

The protein belongs to the TRAFAC class YlqF/YawG GTPase family.

In terms of biological role, possible regulatory or functional link with the histocompatibility cluster. The protein is Guanine nucleotide-binding protein-like 1 (GNL1) of Macaca fascicularis (Crab-eating macaque).